The chain runs to 2198 residues: RNA-directed RNA polymerase L (2198 aa).

The tract at residues 26-284 (KEALLSQVEV…AHSDSLAPEC (259 aa)) is endonuclease. Residues Glu-51, Asp-89, and Glu-102 each contribute to the Mn(2+) site. Lys-115 is a catalytic residue. One can recognise a RdRp catalytic domain in the interval 1161–1359 (CDMKMAVNNG…FLSSKFNKFV (199 aa)). Position 1319 (Asp-1319) interacts with Mg(2+).

The protein belongs to the Bunyavirales RNA polymerase family. Homomultimer; the oligomeric structure is essential for the polymerase activity. Interacts with nucleoprotein N. Interacts with protein Z; this interaction inhibits viral transcription and replication, Z partially blocks the product exit tunnel for the releasing nascent RNA product. It depends on Mn(2+) as a cofactor. Requires Mg(2+) as cofactor.

It localises to the virion. The protein localises to the host cytoplasm. It catalyses the reaction RNA(n) + a ribonucleoside 5'-triphosphate = RNA(n+1) + diphosphate. In terms of biological role, RNA-dependent RNA polymerase, which is responsible for the replication and transcription of the viral RNA genome using antigenomic RNA as an intermediate. During transcription, synthesizes subgenomic RNAs and assures their capping by a cap-snatching mechanism, which involves the endonuclease activity cleaving the host capped pre-mRNAs. These short capped RNAs are then used as primers for viral transcription. The 3'-end of subgenomic mRNAs molecules are heterogeneous and not polyadenylated. The replicase function is to direct synthesis of antigenomic and genomic RNA which are encapsidated and non capped. As a consequence of the use of the same enzyme for both transcription and replication, these mechanisms need to be well coordinated. These processes may be regulated by proteins N and Z in a dose-dependent manner. Z protein inhibits the viral polymerase L und thus the viral transcription and RNA synthesis. The protein is RNA-directed RNA polymerase L of Homo sapiens (Human).